A 140-amino-acid polypeptide reads, in one-letter code: Putative pre-16S rRNA nuclease (140 aa).

The protein belongs to the YqgF nuclease family.

The protein localises to the cytoplasm. Functionally, could be a nuclease involved in processing of the 5'-end of pre-16S rRNA. In Serratia proteamaculans (strain 568), this protein is Putative pre-16S rRNA nuclease.